A 1407-amino-acid chain; its full sequence is MKDLLKFLKAQTKTEEFDAIKIALASPDMIRSWSFGEVKKPETINYRTFKPERDGLFCARIFGPVKDYECLCGKYKRLKHRGVICEKCGVEVTQTKVRRERMGHIELASPTAHIWFLKSLPSRIGLLLDMPLRDIERVLYFESYVVIEGGMTNLERQQILTEEQYLDALEEFGDEFDAKMGAEAIQALLKSMDLEQECEQLREELNETNSETKRKKLTKRIKLLEAFVQSGNKPEWMILTVLPVLPPDLRPLVPLDGGRFATSDLNDLYRRVINRNNRLKRLLDLAAPDIIVRNEKRMLQEAVDALLDNGRRGRAITGSNKRPLKSLADMIKGKQGRFRQNLLGKRVDYSGRSVITVGPYLRLHQCGLPKKMALELFKPFIYGKLELRGLATTIKAAKKMVEREEAVVWDILDEVIREHPVLLNRAPTLHRLGIQAFEPVLIEGKAIQLHPLVCAAYNADFDGDQMAVHVPLTLEAQLEARALMMSTNNILSPANGEPIIVPSQDVVLGLYYMTRDCVNAKGEGMVLTGPKEAERLYRSGLASLHARVKVRITEYEKDANGELVAKTSLKDTTVGRAILWMIVPKGLPYTIVNQALGKKAISKMLNTCYRILGLKPTVIFADQIMYTGFAYAARSGASVGIDDMVIPEKKHEIISEAEAEVAEIQEQFQSGLVTAGERYNKVIDIWAAANDRVSKAMMDNLQTETVINRDGQEEKQVSFNSIYMMADSGARGSAAQIRQLAGMRGLMAKPDGSIIETPITANFREGLNVLQYFISTHGARKGLADTALKTANSGYLTRRLVDVAQDLVVTEDDCGTHEGIMMTPVIEGGDVKEPLRDRVLGRVTAEDVLKPGTADILVPRNTLLHEQWCDLLEENSVDAVKVRSVVSCDTDFGVCAHCYGRDLARGHLINKGEAIGVIAAQSIGEPGTQLTMRTFHIGGAASRAAAESSIQVKNKGSIKLSNVKSVVNSSGKLVITSRNTELKLIDEFGRTKESYKVPYGAVLAKGDGEQVAGGETVANWDPHTMPVITEVSGFVRFTDMIDGQTITRQTDELTGLSSLVVLDSAERTAGGKDLRPALKIVDAQGNDVLIPGTDMPAQYFLPGKAIVQLEDGVQISSGDTLARIPQESGGTKDITGGLPRVADLFEARRPKEPAILAEISGIVSFGKETKGKRRLVITPVDGSDPYEEMIPKWRQLNVFEGERVERGDVISDGPEAPHDILRLRGVHAVTRYIVNEVQDVYRLQGVKINDKHIEVIVRQMLRKATIVNAGSSDFLEGEQVEYSRVKIANRELEANGKVGATYSRDLLGITKASLATESFISAASFQETTRVLTEAAVAGKRDELRGLKENVIVGRLIPAGTGYAYHQDRMRRRAAGEAPAAPQVTAEDASASLAELLNAGLGGSDNE.

The Zn(2+) site is built by cysteine 70, cysteine 72, cysteine 85, and cysteine 88. Aspartate 460, aspartate 462, and aspartate 464 together coordinate Mg(2+). Residues cysteine 814, cysteine 888, cysteine 895, and cysteine 898 each coordinate Zn(2+). At lysine 972 the chain carries N6-acetyllysine.

Belongs to the RNA polymerase beta' chain family. As to quaternary structure, the RNAP catalytic core consists of 2 alpha, 1 beta, 1 beta' and 1 omega subunit. When a sigma factor is associated with the core the holoenzyme is formed, which can initiate transcription. Mg(2+) is required as a cofactor. It depends on Zn(2+) as a cofactor.

The enzyme catalyses RNA(n) + a ribonucleoside 5'-triphosphate = RNA(n+1) + diphosphate. Functionally, DNA-dependent RNA polymerase catalyzes the transcription of DNA into RNA using the four ribonucleoside triphosphates as substrates. The protein is DNA-directed RNA polymerase subunit beta' of Escherichia coli (strain SMS-3-5 / SECEC).